The sequence spans 323 residues: MKTTFLDFEQPIAELEAKIEELRFVQDDSAVDISEEIERLSKKSQQLTKDLYANLSPWQVSQIARHPQRPYTLDYVAELFTDFHELHGDRAYADDVSIVGGLARFGGHPCMVIGHQKGRDTKERAARNFGMPRPEGYRKAERLMRLAEKFGLPIFTFVDTPGAYPGIGAEERGQSEAIGRNLYVMAELKTPIITTVIGEGGSGGALAIAVGDTVMMLQFSTYSVISPEGCASILWKSAAKAPEAAEALGLTAHRLKALGLIDKIINEPLGGAHRDPKGMAALLRRALADSLRQFQGMSIDALRERRFERLMAYGKFKETTPGA.

The 255-residue stretch at 39–293 (RLSKKSQQLT…RRALADSLRQ (255 aa)) folds into the CoA carboxyltransferase C-terminal domain.

It belongs to the AccA family. In terms of assembly, acetyl-CoA carboxylase is a heterohexamer composed of biotin carboxyl carrier protein (AccB), biotin carboxylase (AccC) and two subunits each of ACCase subunit alpha (AccA) and ACCase subunit beta (AccD).

It is found in the cytoplasm. It carries out the reaction N(6)-carboxybiotinyl-L-lysyl-[protein] + acetyl-CoA = N(6)-biotinyl-L-lysyl-[protein] + malonyl-CoA. It participates in lipid metabolism; malonyl-CoA biosynthesis; malonyl-CoA from acetyl-CoA: step 1/1. In terms of biological role, component of the acetyl coenzyme A carboxylase (ACC) complex. First, biotin carboxylase catalyzes the carboxylation of biotin on its carrier protein (BCCP) and then the CO(2) group is transferred by the carboxyltransferase to acetyl-CoA to form malonyl-CoA. This Burkholderia vietnamiensis (strain G4 / LMG 22486) (Burkholderia cepacia (strain R1808)) protein is Acetyl-coenzyme A carboxylase carboxyl transferase subunit alpha.